A 267-amino-acid polypeptide reads, in one-letter code: 3-methyl-2-oxobutanoate hydroxymethyltransferase (267 aa).

Residues Asp46 and Asp85 each coordinate Mg(2+). 3-methyl-2-oxobutanoate is bound by residues 46-47, Asp85, and Lys115; that span reads DS. Glu117 serves as a coordination point for Mg(2+). The active-site Proton acceptor is the Glu184.

The protein belongs to the PanB family. In terms of assembly, homodecamer; pentamer of dimers. Requires Mg(2+) as cofactor.

The protein resides in the cytoplasm. It catalyses the reaction 3-methyl-2-oxobutanoate + (6R)-5,10-methylene-5,6,7,8-tetrahydrofolate + H2O = 2-dehydropantoate + (6S)-5,6,7,8-tetrahydrofolate. It functions in the pathway cofactor biosynthesis; (R)-pantothenate biosynthesis; (R)-pantoate from 3-methyl-2-oxobutanoate: step 1/2. Functionally, catalyzes the reversible reaction in which hydroxymethyl group from 5,10-methylenetetrahydrofolate is transferred onto alpha-ketoisovalerate to form ketopantoate. This is 3-methyl-2-oxobutanoate hydroxymethyltransferase from Syntrophotalea carbinolica (strain DSM 2380 / NBRC 103641 / GraBd1) (Pelobacter carbinolicus).